A 590-amino-acid polypeptide reads, in one-letter code: Pescadillo homolog (590 aa).

A disordered region spans residues 297 to 318; sequence AKADAGEEEEVEEEEEVEDDGL. The segment covering 302–318 has biased composition (acidic residues); sequence GEEEEVEEEEEVEDDGL. One can recognise a BRCT domain in the interval 337–446; sequence TAGQLFSNFT…KLLPVSEYAP (110 aa). The interval 452–590 is disordered; it reads AHLSPWGDAG…RKLNEKKEKR (139 aa). The segment covering 471–499 has biased composition (acidic residues); sequence DASDDDEDDEDIEVAPEDYDKDDEEEEAE. Residues 489–589 are a coiled coil; that stretch reads YDKDDEEEEA…RRKLNEKKEK (101 aa). Composition is skewed to basic and acidic residues over residues 500–517, 532–547, and 567–577; these read AEAK…KGTK, DKMT…DKKL, and NDKKSDREAEL.

The protein belongs to the pescadillo family. As to quaternary structure, component of the NOP7 complex, composed of ERB1, NOP7 and YTM1. The complex is held together by ERB1, which interacts with NOP7 via its N-terminal domain and with YTM1 via a high-affinity interaction between the seven-bladed beta-propeller domains of the 2 proteins. The NOP7 complex associates with the 66S pre-ribosome.

The protein resides in the nucleus. It localises to the nucleolus. It is found in the nucleoplasm. Component of the NOP7 complex, which is required for maturation of the 25S and 5.8S ribosomal RNAs and formation of the 60S ribosome. The sequence is that of Pescadillo homolog from Yarrowia lipolytica (strain CLIB 122 / E 150) (Yeast).